A 578-amino-acid chain; its full sequence is Leucine-rich repeat-containing protein 15 (578 aa).

An N-terminal signal peptide occupies residues 1–21; sequence MPLKHYLLLLVGCQAWALGLA. The region spanning 22-53 is the LRRNT domain; sequence YYGCPSECTCSRASQVECTGARIVAMPTPLPW. At 22-535 the chain is on the extracellular side; that stretch reads YYGCPSECTC…TWGMTEAQSG (514 aa). LRR repeat units lie at residues 54 to 75, 78 to 99, 102 to 123, 126 to 147, 150 to 171, 174 to 195, 198 to 219, 222 to 243, 246 to 267, 270 to 291, 294 to 315, 318 to 339, 342 to 363, 366 to 387, and 390 to 411; these read NAMSLQVVNTHITELPENLFLN, ALIALKMEKNELSTIMPGAFRN, SLRYLSLANNKLRMLPIRVFQD, NLESLLLSNNQLVQIQPAQFSQ, NLRELQLHGNNLESIPEEAFDH, GLTKLNLGRNSFTHLSPRLFQH, NLQVLRLHENRLSDIPMGTFDA, NLQELALQENQIGTLSPGLFHN, NLQRLYLSNNHISQLPPGIFMQ, QLNKLTLFGNSLRELSPGVFGP, NLRELWLYNNHITSLADNTFSH, QLQVLILSHNQLTYISPGAFNG, NLRELSLHTNALQDLDSNVFRS, NLQNISLQSNRLRQLPGSIFAN, and GLTTIQLQNNNLENLPLGIFDH. A glycan (N-linked (GlcNAc...) asparagine) is linked at Asn75. N-linked (GlcNAc...) asparagine glycosylation is present at Asn369. One can recognise an LRRCT domain in the interval 423–473; the sequence is NPWRCDSDILPLHNWLLLNRARLGTDTLPVCSSPANVRGQSLVIININFPG. A disordered region spans residues 476–500; it reads VQGPETPEVPSYPDTPSYPDTTSVS. The helical transmembrane segment at 536-556 threads the bilayer; it reads LAIAAIVIGIIALACSLAACI. At 557-578 the chain is on the cytoplasmic side; sequence CCCCCKKRSQAVLMQMKAPNEC.

The protein resides in the cell membrane. The protein is Leucine-rich repeat-containing protein 15 (Lrrc15) of Rattus norvegicus (Rat).